Reading from the N-terminus, the 389-residue chain is Phospho-N-acetylmuramoyl-pentapeptide-transferase (389 aa).

10 helical membrane passes run 25–45 (RAVA…PWVI), 73–93 (TMGG…WADL), 97–117 (FIWI…VDDY), 135–155 (FWQS…VSEA), 189–209 (SMTY…VIVG), 222–242 (GLVI…AYVM), 259–279 (AGEM…FLWF), 286–306 (VFMG…IAVI), 311–331 (IVLF…MLQV), and 366–386 (QVVV…LSTL).

This sequence belongs to the glycosyltransferase 4 family. MraY subfamily. It depends on Mg(2+) as a cofactor.

Its subcellular location is the cell inner membrane. The enzyme catalyses UDP-N-acetyl-alpha-D-muramoyl-L-alanyl-gamma-D-glutamyl-meso-2,6-diaminopimeloyl-D-alanyl-D-alanine + di-trans,octa-cis-undecaprenyl phosphate = di-trans,octa-cis-undecaprenyl diphospho-N-acetyl-alpha-D-muramoyl-L-alanyl-D-glutamyl-meso-2,6-diaminopimeloyl-D-alanyl-D-alanine + UMP. Its pathway is cell wall biogenesis; peptidoglycan biosynthesis. Catalyzes the initial step of the lipid cycle reactions in the biosynthesis of the cell wall peptidoglycan: transfers peptidoglycan precursor phospho-MurNAc-pentapeptide from UDP-MurNAc-pentapeptide onto the lipid carrier undecaprenyl phosphate, yielding undecaprenyl-pyrophosphoryl-MurNAc-pentapeptide, known as lipid I. The chain is Phospho-N-acetylmuramoyl-pentapeptide-transferase from Paraburkholderia phymatum (strain DSM 17167 / CIP 108236 / LMG 21445 / STM815) (Burkholderia phymatum).